The sequence spans 372 residues: Flap endonuclease 1 (372 aa).

Residues 1 to 105 form an N-domain region; sequence MGVKGLNQLI…GELEKRLLRR (105 aa). Asp-34 serves as a coordination point for Mg(2+). 2 residues coordinate DNA: Arg-47 and Arg-71. Mg(2+) contacts are provided by Asp-87, Glu-159, Glu-161, Asp-180, and Asp-182. The I-domain stretch occupies residues 123 to 254; sequence EVLKFEKRLV…ATAFKLIKEH (132 aa). Glu-159 serves as a coordination point for DNA. DNA is bound by residues Gly-232 and Asp-234. Asp-234 serves as a coordination point for Mg(2+). The tract at residues 339–347 is interaction with PCNA; the sequence is VQGRLDGFF. Residues 353 to 366 are compositionally biased toward basic and acidic residues; sequence DDKKRKADPKESKA. Residues 353–372 are disordered; that stretch reads DDKKRKADPKESKASKKKKK.

The protein belongs to the XPG/RAD2 endonuclease family. FEN1 subfamily. Interacts with PCNA. Three molecules of RAD27 bind to one PCNA trimer with each molecule binding to one PCNA monomer. PCNA stimulates the nuclease activity without altering cleavage specificity. The cofactor is Mg(2+). In terms of processing, phosphorylated. Phosphorylation upon DNA damage induces relocalization to the nuclear plasma.

The protein resides in the nucleus. It is found in the nucleolus. It localises to the nucleoplasm. The protein localises to the mitochondrion. Structure-specific nuclease with 5'-flap endonuclease and 5'-3' exonuclease activities involved in DNA replication and repair. During DNA replication, cleaves the 5'-overhanging flap structure that is generated by displacement synthesis when DNA polymerase encounters the 5'-end of a downstream Okazaki fragment. It enters the flap from the 5'-end and then tracks to cleave the flap base, leaving a nick for ligation. Also involved in the long patch base excision repair (LP-BER) pathway, by cleaving within the apurinic/apyrimidinic (AP) site-terminated flap. Acts as a genome stabilization factor that prevents flaps from equilibrating into structures that lead to duplications and deletions. Also possesses 5'-3' exonuclease activity on nicked or gapped double-stranded DNA, and exhibits RNase H activity. Also involved in replication and repair of rDNA and in repairing mitochondrial DNA. The chain is Flap endonuclease 1 from Candida albicans (strain WO-1) (Yeast).